The following is a 320-amino-acid chain: Apolipoprotein E (320 aa).

The N-terminal stretch at 1 to 18 (MKVLWAALLVAFLAGCQG) is a signal peptide. A run of 8 repeats spans residues 82-103 (ALMDETMKELKAYKSELEEQLS), 104-125 (PVAEETRARLSKELQAAQARLG), 126-147 (ADMEDVRSRLAQYRSEVQAMLG), 148-169 (QSTEELRARLASHLRKLRKRLL), 170-191 (RDVDDLQKRLAVYQAGAREGAE), 192-213 (RGVSAIRERLGPLVEQGRARAA), 214-236 (TVGSSLAGQPLQERAQAWGERLR), and 237-258 (ARMEEVGSRTRDRLDEVKEQVE). The tract at residues 82-258 (ALMDETMKEL…RLDEVKEQVE (177 aa)) is 8 X 22 AA approximate tandem repeats. Met145 carries the post-translational modification Methionine sulfoxide. Position 149 is a phosphoserine (Ser149). Residues 160 to 170 (HLRKLRKRLLR) are LDL and other lipoprotein receptors binding. Position 164–167 (164–167 (LRKR)) interacts with heparin. The interval 212–293 (AATVGSSLAG…SWFEPLVEDM (82 aa)) is lipid-binding and lipoprotein association. 232-239 (GERLRARM) contributes to the heparin binding site. Residues 269-320 (QQMRLQAEAFQARLKSWFEPLVEDMQRQWAGLVEKVQAAVGASAAPVPSDNH) are homooligomerization. Residues 281-293 (RLKSWFEPLVEDM) form a specificity for association with VLDL region.

This sequence belongs to the apolipoprotein A1/A4/E family. Homotetramer. May interact with ABCA1; functionally associated with ABCA1 in the biogenesis of HDLs. May interact with APP/A4 amyloid-beta peptide; the interaction is extremely stable in vitro but its physiological significance is unclear. May interact with MAPT. May interact with MAP2. In the cerebrospinal fluid, interacts with secreted SORL1. Interacts with PMEL; this allows the loading of PMEL luminal fragment on ILVs to induce fibril nucleation. APOE exists as multiple glycosylated and sialylated glycoforms within cells and in plasma. The extent of glycosylation and sialylation are tissue and context specific. Post-translationally, glycated in plasma VLDL. In terms of processing, phosphorylated by FAM20C in the extracellular medium.

The protein localises to the secreted. Its subcellular location is the extracellular space. It localises to the extracellular matrix. It is found in the extracellular vesicle. The protein resides in the endosome. The protein localises to the multivesicular body. In terms of biological role, APOE is an apolipoprotein, a protein associating with lipid particles, that mainly functions in lipoprotein-mediated lipid transport between organs via the plasma and interstitial fluids. APOE is a core component of plasma lipoproteins and is involved in their production, conversion and clearance. Apolipoproteins are amphipathic molecules that interact both with lipids of the lipoprotein particle core and the aqueous environment of the plasma. As such, APOE associates with chylomicrons, chylomicron remnants, very low density lipoproteins (VLDL) and intermediate density lipoproteins (IDL) but shows a preferential binding to high-density lipoproteins (HDL). It also binds a wide range of cellular receptors including the LDL receptor/LDLR, the LDL receptor-related proteins LRP1, LRP2 and LRP8 and the very low-density lipoprotein receptor/VLDLR that mediate the cellular uptake of the APOE-containing lipoprotein particles. Finally, APOE also has a heparin-binding activity and binds heparan-sulfate proteoglycans on the surface of cells, a property that supports the capture and the receptor-mediated uptake of APOE-containing lipoproteins by cells. A main function of APOE is to mediate lipoprotein clearance through the uptake of chylomicrons, VLDLs, and HDLs by hepatocytes. APOE is also involved in the biosynthesis by the liver of VLDLs as well as their uptake by peripheral tissues ensuring the delivery of triglycerides and energy storage in muscle, heart and adipose tissues. By participating in the lipoprotein-mediated distribution of lipids among tissues, APOE plays a critical role in plasma and tissues lipid homeostasis. APOE is also involved in two steps of reverse cholesterol transport, the HDLs-mediated transport of cholesterol from peripheral tissues to the liver, and thereby plays an important role in cholesterol homeostasis. First, it is functionally associated with ABCA1 in the biogenesis of HDLs in tissues. Second, it is enriched in circulating HDLs and mediates their uptake by hepatocytes. APOE also plays an important role in lipid transport in the central nervous system, regulating neuron survival and sprouting. This chain is Apolipoprotein E (APOE), found in Plecturocebus moloch (Dusky titi monkey).